A 754-amino-acid polypeptide reads, in one-letter code: Protein tyrosine phosphatase domain-containing protein 1 (754 aa).

Positions 82–253 constitute a Tyrosine-protein phosphatase domain; sequence YSSWVTDNIL…LTPLRNIFSC (172 aa). The Phosphocysteine intermediate role is filled by Cys190. Ser392 and Ser394 each carry phosphoserine. Polar residues predominate over residues 487–498; sequence SGAFSADVSGSH. The disordered stretch occupies residues 487 to 554; that stretch reads SGAFSADVSG…PRSPLDCGSS (68 aa). A Phosphoserine modification is found at Ser547.

This sequence belongs to the protein-tyrosine phosphatase family. Non-receptor class PTPDC1 subfamily.

In terms of biological role, may play roles in cilia formation and/or maintenance. This Homo sapiens (Human) protein is Protein tyrosine phosphatase domain-containing protein 1 (PTPDC1).